The primary structure comprises 430 residues: Cysteate synthase (430 aa).

Residue Lys-106 is modified to N6-(pyridoxal phosphate)lysine. 2 residues coordinate pyridoxal 5'-phosphate: Asn-132 and Thr-381.

The protein belongs to the threonine synthase family. Cysteate synthase subfamily. Homotrimer. It depends on pyridoxal 5'-phosphate as a cofactor.

It carries out the reaction O-phospho-L-serine + sulfite + H(+) = L-cysteate + phosphate. It functions in the pathway cofactor biosynthesis; coenzyme M biosynthesis. Its function is as follows. Specifically catalyzes the beta-elimination of phosphate from L-phosphoserine and the beta-addition of sulfite to the dehydroalanine intermediate to produce L-cysteate. The chain is Cysteate synthase from Methanoculleus marisnigri (strain ATCC 35101 / DSM 1498 / JR1).